We begin with the raw amino-acid sequence, 63 residues long: Large ribosomal subunit protein bL35 (63 aa).

Residues 1-22 (MPKMKTKSGATKRFKKTATGFK) form a disordered region.

It belongs to the bacterial ribosomal protein bL35 family.

This is Large ribosomal subunit protein bL35 from Marinobacter nauticus (strain ATCC 700491 / DSM 11845 / VT8) (Marinobacter aquaeolei).